Consider the following 122-residue polypeptide: Large ribosomal subunit protein uL14 (122 aa).

Belongs to the universal ribosomal protein uL14 family. As to quaternary structure, part of the 50S ribosomal subunit. Forms a cluster with proteins L3 and L19. In the 70S ribosome, L14 and L19 interact and together make contacts with the 16S rRNA in bridges B5 and B8.

In terms of biological role, binds to 23S rRNA. Forms part of two intersubunit bridges in the 70S ribosome. The sequence is that of Large ribosomal subunit protein uL14 from Hydrogenovibrio crunogenus (strain DSM 25203 / XCL-2) (Thiomicrospira crunogena).